The following is a 114-amino-acid chain: Probable acid stress chaperone HdeA (114 aa).

An N-terminal signal peptide occupies residues 1-26 (MIKALFNKNTALAAVAILALSGGAMA). An intrachain disulfide couples Cys-46 to Cys-94.

Belongs to the HdeA family.

It is found in the periplasm. Its function is as follows. Required for optimal acid stress protection. Exhibits a chaperone-like activity only at low pH by suppressing non-specifically the aggregation of denaturated periplasmic proteins. Contributes to acid resistance. Not required for wild-type virulence in the BALB/c mouse model. In Brucella abortus (strain 2308), this protein is Probable acid stress chaperone HdeA.